Reading from the N-terminus, the 358-residue chain is Chorismate synthase (358 aa).

NADP(+) is bound by residues arginine 48 and arginine 54. FMN-binding positions include arginine 125–serine 127, glycine 282, lysine 297–serine 301, and arginine 323.

Belongs to the chorismate synthase family. In terms of assembly, homotetramer. It depends on FMNH2 as a cofactor.

The catalysed reaction is 5-O-(1-carboxyvinyl)-3-phosphoshikimate = chorismate + phosphate. Its pathway is metabolic intermediate biosynthesis; chorismate biosynthesis; chorismate from D-erythrose 4-phosphate and phosphoenolpyruvate: step 7/7. Its function is as follows. Catalyzes the anti-1,4-elimination of the C-3 phosphate and the C-6 proR hydrogen from 5-enolpyruvylshikimate-3-phosphate (EPSP) to yield chorismate, which is the branch point compound that serves as the starting substrate for the three terminal pathways of aromatic amino acid biosynthesis. This reaction introduces a second double bond into the aromatic ring system. This is Chorismate synthase from Roseiflexus castenholzii (strain DSM 13941 / HLO8).